A 397-amino-acid polypeptide reads, in one-letter code: Putative F-box protein At1g26510 (397 aa).

Residues 1–23 are disordered; sequence MRTRSKKTKTVNNNNDLQKSEEK. One can recognise an F-box domain in the interval 24 to 71; that stretch reads QKFDQLPLDLEIEMFRRLPLKSVARFLTLSKSCATTIRSPSFITSFPS.

The sequence is that of Putative F-box protein At1g26510 from Arabidopsis thaliana (Mouse-ear cress).